Consider the following 164-residue polypeptide: Transcriptional regulator MraZ (164 aa).

SpoVT-AbrB domains are found at residues arginine 7–valine 63 and leucine 92–arginine 135.

It belongs to the MraZ family. As to quaternary structure, forms oligomers.

The protein resides in the cytoplasm. The protein localises to the nucleoid. The polypeptide is Transcriptional regulator MraZ (Chlorobaculum parvum (strain DSM 263 / NCIMB 8327) (Chlorobium vibrioforme subsp. thiosulfatophilum)).